A 481-amino-acid polypeptide reads, in one-letter code: Uridine 5'-monophosphate synthase (481 aa).

Residues 1 to 214 (MEVASQALGP…VFSAANHNGL (214 aa)) are OPRTase. The residue at position 37 (tyrosine 37) is a Phosphotyrosine. A domain linker region spans residues 215–220 (PPPEKK). An OMPdecase region spans residues 221–481 (ACKELSFGAR…EAYLSRLAVQ (261 aa)). Serine 257 provides a ligand contact to orotidine 5'-phosphate. UMP-binding positions include serine 257, aspartate 259, and 281 to 283 (KTH). Orotidine 5'-phosphate is bound by residues lysine 281, lysine 314, aspartate 317, threonine 321, serine 372, 430-432 (QQY), and 450-451 (GR). Catalysis depends on for OMPdecase activity residues lysine 314 and aspartate 317. Residues aspartate 317, threonine 321, serine 372, 430–432 (QQY), and 450–451 (GR) contribute to the UMP site.

This sequence in the N-terminal section; belongs to the purine/pyrimidine phosphoribosyltransferase family. The protein in the C-terminal section; belongs to the OMP decarboxylase family. In terms of assembly, homodimer; dimerization is required for enzymatic activity.

It catalyses the reaction orotidine 5'-phosphate + diphosphate = orotate + 5-phospho-alpha-D-ribose 1-diphosphate. It carries out the reaction orotidine 5'-phosphate + H(+) = UMP + CO2. Its pathway is pyrimidine metabolism; UMP biosynthesis via de novo pathway; UMP from orotate: step 1/2. It participates in pyrimidine metabolism; UMP biosynthesis via de novo pathway; UMP from orotate: step 2/2. Its function is as follows. Bifunctional enzyme catalyzing the last two steps of de novo pyrimidine biosynthesis, orotate phosphoribosyltransferase (OPRT), which converts orotate to orotidine-5'-monophosphate (OMP), and orotidine-5'-monophosphate decarboxylase (ODC), the terminal enzymatic reaction that decarboxylates OMP to uridine monophosphate (UMP). The chain is Uridine 5'-monophosphate synthase (Umps) from Mus musculus (Mouse).